Reading from the N-terminus, the 187-residue chain is Elongation factor P (187 aa).

It belongs to the elongation factor P family.

Its subcellular location is the cytoplasm. Its pathway is protein biosynthesis; polypeptide chain elongation. Involved in peptide bond synthesis. Stimulates efficient translation and peptide-bond synthesis on native or reconstituted 70S ribosomes in vitro. Probably functions indirectly by altering the affinity of the ribosome for aminoacyl-tRNA, thus increasing their reactivity as acceptors for peptidyl transferase. This chain is Elongation factor P, found in Acidothermus cellulolyticus (strain ATCC 43068 / DSM 8971 / 11B).